Reading from the N-terminus, the 605-residue chain is Elongation factor 4 (605 aa).

A tr-type G domain is found at 11–193 (KCIRNFSIIA…QIVTRISPPQ (183 aa)). Residues 23-28 (DHGKST) and 140-143 (NKVD) contribute to the GTP site.

The protein belongs to the TRAFAC class translation factor GTPase superfamily. Classic translation factor GTPase family. LepA subfamily.

It localises to the cell membrane. The enzyme catalyses GTP + H2O = GDP + phosphate + H(+). Required for accurate and efficient protein synthesis under certain stress conditions. May act as a fidelity factor of the translation reaction, by catalyzing a one-codon backward translocation of tRNAs on improperly translocated ribosomes. Back-translocation proceeds from a post-translocation (POST) complex to a pre-translocation (PRE) complex, thus giving elongation factor G a second chance to translocate the tRNAs correctly. Binds to ribosomes in a GTP-dependent manner. This chain is Elongation factor 4, found in Aster yellows witches'-broom phytoplasma (strain AYWB).